The chain runs to 258 residues: Phosphate import ATP-binding protein PstB (258 aa).

In terms of domain architecture, ABC transporter spans 13-253 (IEVENLNLWY…PKEQSTEDYI (241 aa)). 45–52 (GPSGCGKS) contacts ATP.

It belongs to the ABC transporter superfamily. Phosphate importer (TC 3.A.1.7) family. In terms of assembly, the complex is composed of two ATP-binding proteins (PstB), two transmembrane proteins (PstC and PstA) and a solute-binding protein (PstS).

It is found in the cell membrane. It catalyses the reaction phosphate(out) + ATP + H2O = ADP + 2 phosphate(in) + H(+). Functionally, part of the ABC transporter complex PstSACB involved in phosphate import. Responsible for energy coupling to the transport system. The protein is Phosphate import ATP-binding protein PstB of Methanosarcina acetivorans (strain ATCC 35395 / DSM 2834 / JCM 12185 / C2A).